We begin with the raw amino-acid sequence, 571 residues long: MRASRFLFATLRETPNDAEVISHQLMLRAGMIRKLASGLYTWLPMGTRVLKKVDAIVREEMNRSGAMEVFMPVTQPASLWEESGRYEQYGPELLRFKDRHDNPFVLGPTHEEVITDLARNELKSYKQLPVNFYQIQTKFRDEIRPRFGVMRSREFIMKDAYSFHATQESLQETYDVMYDTYSRIFTRLGLDFRPVQADTGSIGGSASHEFHVLAASGEDDIAFSTESDYAANVEMAEAVLVGERAAPTQEFKLVETPNQKTIADVCQFLNADPKQSVKALLVQGVADEKGNVPVVALFLRGDHELNEIKAEKHPLVAAPLAFATEEQLQAFGLTAGFTGPQGLVEKGITVIVDRAASVLSDFVAGANEADKHAIGVNWERDAQITEVFDLRNVVEGDPSPDGKGTLQIKRGIEVGHIFQLGTKYSEALGCKVLGEDGKPFTVTMGCYGIGVTRVVAAAIEQNYDDKGIIWPQAIAPFEIAIVPMNAHKSPRTLEAAEALYAELQAQGFDVLLDDRNERPGVKFSDLELMGIPHRIVIGEKGLDAGTFEYKGRRDAEASNLTKEELLAKLAR.

This sequence belongs to the class-II aminoacyl-tRNA synthetase family. ProS type 1 subfamily. Homodimer.

It localises to the cytoplasm. It carries out the reaction tRNA(Pro) + L-proline + ATP = L-prolyl-tRNA(Pro) + AMP + diphosphate. In terms of biological role, catalyzes the attachment of proline to tRNA(Pro) in a two-step reaction: proline is first activated by ATP to form Pro-AMP and then transferred to the acceptor end of tRNA(Pro). As ProRS can inadvertently accommodate and process non-cognate amino acids such as alanine and cysteine, to avoid such errors it has two additional distinct editing activities against alanine. One activity is designated as 'pretransfer' editing and involves the tRNA(Pro)-independent hydrolysis of activated Ala-AMP. The other activity is designated 'posttransfer' editing and involves deacylation of mischarged Ala-tRNA(Pro). The misacylated Cys-tRNA(Pro) is not edited by ProRS. The chain is Proline--tRNA ligase from Acinetobacter baumannii (strain AB307-0294).